A 170-amino-acid polypeptide reads, in one-letter code: Lipoprotein signal peptidase (170 aa).

4 helical membrane-spanning segments follow: residues 11 to 31, 41 to 61, 69 to 89, and 95 to 115; these read LGWL…KLHF, IVVI…AAFS, WQRW…VVWL, and NETW…GNLY. Catalysis depends on residues Asp125 and Asp144. A helical transmembrane segment spans residues 136–156; the sequence is YFPAFNFADSAITVGAVMLAL.

It belongs to the peptidase A8 family.

The protein resides in the cell inner membrane. It carries out the reaction Release of signal peptides from bacterial membrane prolipoproteins. Hydrolyzes -Xaa-Yaa-Zaa-|-(S,diacylglyceryl)Cys-, in which Xaa is hydrophobic (preferably Leu), and Yaa (Ala or Ser) and Zaa (Gly or Ala) have small, neutral side chains.. Its pathway is protein modification; lipoprotein biosynthesis (signal peptide cleavage). Its function is as follows. This protein specifically catalyzes the removal of signal peptides from prolipoproteins. This Pseudomonas fluorescens (strain ATCC BAA-477 / NRRL B-23932 / Pf-5) protein is Lipoprotein signal peptidase.